The primary structure comprises 190 residues: Peptidyl-tRNA hydrolase (190 aa).

Phenylalanine 14 provides a ligand contact to tRNA. Histidine 19 serves as the catalytic Proton acceptor. The tRNA site is built by methionine 64, asparagine 66, and asparagine 112.

Belongs to the PTH family. In terms of assembly, monomer.

It is found in the cytoplasm. The catalysed reaction is an N-acyl-L-alpha-aminoacyl-tRNA + H2O = an N-acyl-L-amino acid + a tRNA + H(+). Functionally, hydrolyzes ribosome-free peptidyl-tRNAs (with 1 or more amino acids incorporated), which drop off the ribosome during protein synthesis, or as a result of ribosome stalling. Catalyzes the release of premature peptidyl moieties from peptidyl-tRNA molecules trapped in stalled 50S ribosomal subunits, and thus maintains levels of free tRNAs and 50S ribosomes. The polypeptide is Peptidyl-tRNA hydrolase (Staphylococcus saprophyticus subsp. saprophyticus (strain ATCC 15305 / DSM 20229 / NCIMB 8711 / NCTC 7292 / S-41)).